A 291-amino-acid chain; its full sequence is Lipoyl synthase, organellar chromatophore (291 aa).

Residues Cys33, Cys38, Cys44, Cys59, Cys63, Cys66, and Ser274 each coordinate [4Fe-4S] cluster. In terms of domain architecture, Radical SAM core spans 45–263 (FAGGTATFLI…AIGELEMNFL (219 aa)).

The protein belongs to the radical SAM superfamily. Lipoyl synthase family. The cofactor is [4Fe-4S] cluster.

The protein resides in the plastid. It localises to the organellar chromatophore. The catalysed reaction is [[Fe-S] cluster scaffold protein carrying a second [4Fe-4S](2+) cluster] + N(6)-octanoyl-L-lysyl-[protein] + 2 oxidized [2Fe-2S]-[ferredoxin] + 2 S-adenosyl-L-methionine + 4 H(+) = [[Fe-S] cluster scaffold protein] + N(6)-[(R)-dihydrolipoyl]-L-lysyl-[protein] + 4 Fe(3+) + 2 hydrogen sulfide + 2 5'-deoxyadenosine + 2 L-methionine + 2 reduced [2Fe-2S]-[ferredoxin]. Its pathway is protein modification; protein lipoylation via endogenous pathway; protein N(6)-(lipoyl)lysine from octanoyl-[acyl-carrier-protein]: step 2/2. In terms of biological role, catalyzes the radical-mediated insertion of two sulfur atoms into the C-6 and C-8 positions of the octanoyl moiety bound to the lipoyl domains of lipoate-dependent enzymes, thereby converting the octanoylated domains into lipoylated derivatives. The chain is Lipoyl synthase, organellar chromatophore from Paulinella chromatophora.